We begin with the raw amino-acid sequence, 647 residues long: Exoribonuclease 2 (647 aa).

The region spanning 192–520 (REDLTALSFV…NHRLLKAIIS (329 aa)) is the RNB domain. Residues 565–647 (ESTFNAEIID…ETRNIVARPI (83 aa)) enclose the S1 motif domain.

Belongs to the RNR ribonuclease family. RNase II subfamily.

It is found in the cytoplasm. The catalysed reaction is Exonucleolytic cleavage in the 3'- to 5'-direction to yield nucleoside 5'-phosphates.. In terms of biological role, involved in mRNA degradation. Hydrolyzes single-stranded polyribonucleotides processively in the 3' to 5' direction. This Proteus mirabilis (strain HI4320) protein is Exoribonuclease 2.